We begin with the raw amino-acid sequence, 89 residues long: DNA/RNA-binding protein Alba (89 aa).

Belongs to the histone-like Alba family.

The protein localises to the cytoplasm. Its subcellular location is the chromosome. Functionally, binds double-stranded DNA tightly but without sequence specificity. Involved in DNA compaction. The sequence is that of DNA/RNA-binding protein Alba from Methanothrix thermoacetophila (strain DSM 6194 / JCM 14653 / NBRC 101360 / PT) (Methanosaeta thermophila).